The primary structure comprises 554 residues: Oxygen-dependent choline dehydrogenase (554 aa).

4–33 is an FAD binding site; that stretch reads DYIIIGAGSAGNVLATRLTEDPNTTVLLLE. His473 serves as the catalytic Proton acceptor.

This sequence belongs to the GMC oxidoreductase family. Requires FAD as cofactor.

The catalysed reaction is choline + A = betaine aldehyde + AH2. It catalyses the reaction betaine aldehyde + NAD(+) + H2O = glycine betaine + NADH + 2 H(+). It functions in the pathway amine and polyamine biosynthesis; betaine biosynthesis via choline pathway; betaine aldehyde from choline (cytochrome c reductase route): step 1/1. Involved in the biosynthesis of the osmoprotectant glycine betaine. Catalyzes the oxidation of choline to betaine aldehyde and betaine aldehyde to glycine betaine at the same rate. In Klebsiella pneumoniae subsp. pneumoniae (strain ATCC 700721 / MGH 78578), this protein is Oxygen-dependent choline dehydrogenase.